Consider the following 129-residue polypeptide: Fluoride-specific ion channel FluC (129 aa).

The next 4 membrane-spanning stretches (helical) occupy residues 8–28, 36–56, 71–91, and 103–123; these read FFCV…MVLA, AFPF…GLLL, FLGV…VEVV, and ALHI…AMML. Na(+)-binding residues include G78 and T81.

The protein belongs to the fluoride channel Fluc/FEX (TC 1.A.43) family.

The protein resides in the cell inner membrane. The enzyme catalyses fluoride(in) = fluoride(out). Its activity is regulated as follows. Na(+) is not transported, but it plays an essential structural role and its presence is essential for fluoride channel function. Functionally, fluoride-specific ion channel. Important for reducing fluoride concentration in the cell, thus reducing its toxicity. The protein is Fluoride-specific ion channel FluC of Idiomarina loihiensis (strain ATCC BAA-735 / DSM 15497 / L2-TR).